A 367-amino-acid chain; its full sequence is Heme A synthase (367 aa).

5 consecutive transmembrane segments (helical) span residues 26 to 46 (IRGW…VGGA), 111 to 131 (LLAR…WLTG), 139 to 159 (LPLL…WWMV), 174 to 194 (LATH…IYRG), and 212 to 232 (AGII…VAGL). A heme-binding site is contributed by His274. The next 3 helical transmembrane spans lie at 276 to 296 (AGAY…LRAA), 305 to 325 (SVLL…TLLL), and 327 to 347 (VPIV…GFAI). His335 provides a ligand contact to heme.

It belongs to the COX15/CtaA family. Type 2 subfamily. As to quaternary structure, interacts with CtaB. Heme b is required as a cofactor.

The protein localises to the cell membrane. The enzyme catalyses Fe(II)-heme o + 2 A + H2O = Fe(II)-heme a + 2 AH2. Its pathway is porphyrin-containing compound metabolism; heme A biosynthesis; heme A from heme O: step 1/1. Catalyzes the conversion of heme O to heme A by two successive hydroxylations of the methyl group at C8. The first hydroxylation forms heme I, the second hydroxylation results in an unstable dihydroxymethyl group, which spontaneously dehydrates, resulting in the formyl group of heme A. The sequence is that of Heme A synthase from Sinorhizobium fredii (strain NBRC 101917 / NGR234).